A 254-amino-acid polypeptide reads, in one-letter code: Small ribosomal subunit protein uS2 (254 aa).

It belongs to the universal ribosomal protein uS2 family.

The protein is Small ribosomal subunit protein uS2 of Legionella pneumophila subsp. pneumophila (strain Philadelphia 1 / ATCC 33152 / DSM 7513).